A 424-amino-acid polypeptide reads, in one-letter code: CinA-like protein (424 aa).

It belongs to the CinA family.

The protein is CinA-like protein of Prochlorococcus marinus (strain MIT 9312).